A 560-amino-acid chain; its full sequence is Ribonuclease J 1 (560 aa).

Zn(2+) is bound by residues His-76, His-78, Asp-80, His-81, His-144, and Asp-166. A substrate-binding site is contributed by 366–370; it reads HTSGH. His-392 is a binding site for Zn(2+).

The protein belongs to the metallo-beta-lactamase superfamily. RNA-metabolizing metallo-beta-lactamase-like family. Bacterial RNase J subfamily. As to quaternary structure, homodimer, may be a subunit of the RNA degradosome. Requires Zn(2+) as cofactor.

It is found in the cytoplasm. In terms of biological role, an RNase that has 5'-3' exonuclease and possibly endonuclease activity. Involved in maturation of rRNA and in some organisms also mRNA maturation and/or decay. Has an overlapping but not completely redundant role with RNase J2 in the decay of mRNA. The sequence is that of Ribonuclease J 1 from Streptococcus pyogenes serotype M3 (strain ATCC BAA-595 / MGAS315).